A 338-amino-acid chain; its full sequence is Ketol-acid reductoisomerase (NADP(+)) (338 aa).

A KARI N-terminal Rossmann domain is found at 1-181 (MKVYYDKDCD…GGGRTGIIET (181 aa)). NADP(+) contacts are provided by residues 24–27 (YGSQ), arginine 47, serine 50, serine 52, and 82–85 (DEFQ). Residue histidine 107 is part of the active site. Glycine 133 is a binding site for NADP(+). One can recognise a KARI C-terminal knotted domain in the interval 182–327 (TFKDETETDL…EKLRTMMPWI (146 aa)). Mg(2+)-binding residues include aspartate 190, glutamate 194, glutamate 226, and glutamate 230. Substrate is bound at residue serine 251.

It belongs to the ketol-acid reductoisomerase family. It depends on Mg(2+) as a cofactor.

The enzyme catalyses (2R)-2,3-dihydroxy-3-methylbutanoate + NADP(+) = (2S)-2-acetolactate + NADPH + H(+). The catalysed reaction is (2R,3R)-2,3-dihydroxy-3-methylpentanoate + NADP(+) = (S)-2-ethyl-2-hydroxy-3-oxobutanoate + NADPH + H(+). Its pathway is amino-acid biosynthesis; L-isoleucine biosynthesis; L-isoleucine from 2-oxobutanoate: step 2/4. It functions in the pathway amino-acid biosynthesis; L-valine biosynthesis; L-valine from pyruvate: step 2/4. Involved in the biosynthesis of branched-chain amino acids (BCAA). Catalyzes an alkyl-migration followed by a ketol-acid reduction of (S)-2-acetolactate (S2AL) to yield (R)-2,3-dihydroxy-isovalerate. In the isomerase reaction, S2AL is rearranged via a Mg-dependent methyl migration to produce 3-hydroxy-3-methyl-2-ketobutyrate (HMKB). In the reductase reaction, this 2-ketoacid undergoes a metal-dependent reduction by NADPH to yield (R)-2,3-dihydroxy-isovalerate. The protein is Ketol-acid reductoisomerase (NADP(+)) of Azotobacter vinelandii (strain DJ / ATCC BAA-1303).